A 236-amino-acid polypeptide reads, in one-letter code: Small ribosomal subunit protein uS2c (236 aa).

Belongs to the universal ribosomal protein uS2 family.

Its subcellular location is the plastid. It is found in the chloroplast. This Zea mays (Maize) protein is Small ribosomal subunit protein uS2c (rps2).